The chain runs to 133 residues: U-scoloptoxin(11)-Sm1a (133 aa).

A signal peptide spans 1-19; the sequence is MIWFLAFILFLAAGELVSS.

This sequence belongs to the scoloptoxin-11 family. Post-translationally, contains 10 disulfide bonds. In terms of tissue distribution, expressed by the venom gland.

It is found in the secreted. The polypeptide is U-scoloptoxin(11)-Sm1a (Scolopendra morsitans (Tanzanian blue ringleg centipede)).